Consider the following 330-residue polypeptide: Copper-containing nitrite reductase (330 aa).

Plastocyanin-like domains are found at residues 1-165 (GLPR…YDRV) and 166-330 (YTIG…PGPA). Residues histidine 85, histidine 90, histidine 125, cysteine 126, histidine 135, methionine 140, and histidine 296 each coordinate Cu cation.

It belongs to the multicopper oxidase family. Homotrimer. The cofactor is Cu(2+). Requires Cu(+) as cofactor. FAD is required as a cofactor.

The protein resides in the periplasm. It carries out the reaction nitric oxide + Fe(III)-[cytochrome c] + H2O = Fe(II)-[cytochrome c] + nitrite + 2 H(+). It functions in the pathway nitrogen metabolism; nitrate reduction (denitrification); dinitrogen from nitrate: step 2/4. This Alcaligenes xylosoxydans xylosoxydans (Achromobacter xylosoxidans) protein is Copper-containing nitrite reductase (nirK).